A 549-amino-acid chain; its full sequence is Hydroxylamine reductase (549 aa).

4 residues coordinate [4Fe-4S] cluster: C3, C6, C15, and C21. 8 residues coordinate hybrid [4Fe-2O-2S] cluster: H248, E272, C316, C403, C431, C456, E490, and K492. Position 403 is a cysteine persulfide (C403).

It belongs to the HCP family. The cofactor is [4Fe-4S] cluster. Requires hybrid [4Fe-2O-2S] cluster as cofactor.

It is found in the cytoplasm. It carries out the reaction A + NH4(+) + H2O = hydroxylamine + AH2 + H(+). In terms of biological role, catalyzes the reduction of hydroxylamine to form NH(3) and H(2)O. This chain is Hydroxylamine reductase, found in Rhodospirillum rubrum (strain ATCC 11170 / ATH 1.1.1 / DSM 467 / LMG 4362 / NCIMB 8255 / S1).